The sequence spans 349 residues: Glycosyltransferase 8 domain-containing protein 2 (349 aa).

The Cytoplasmic portion of the chain corresponds to 1–6; the sequence is MALLRK. Residues 7–24 traverse the membrane as a helical; Signal-anchor for type II membrane protein segment; sequence INQVLLFLLIVTLCVILY. Topologically, residues 25–349 are lumenal; the sequence is KKVHKGTVSK…AGIFKLNHHS (325 aa). Asn234 is a glycosylation site (N-linked (GlcNAc...) asparagine).

This sequence belongs to the glycosyltransferase 8 family.

The protein localises to the membrane. The polypeptide is Glycosyltransferase 8 domain-containing protein 2 (GLT8D2) (Macaca fascicularis (Crab-eating macaque)).